Consider the following 471-residue polypeptide: 7-dehydrocholesterol reductase (471 aa).

The segment at 1 to 23 (MASKSQHNAPKVKSPNGKAGSQG) is disordered. A Phosphoserine modification is found at Ser14. Helical transmembrane passes span 36 to 56 (LASIIFLLLFAPFIVYYFIMA), 95 to 115 (LYALWVSFQVLLYSWLPDFCH), 144 to 164 (LQAWLITHILWFVNAYLLSWF), 173 to 193 (WIPLLWCANILGYAVSTFAMI), 233 to 253 (LFFNGRPGIVAWTLINLSFAA), 262 to 282 (VTNSMILVNVLQAIYVLDFFW), 302 to 322 (LGWGDCVWLPYLYTLQGLYLV), and 327 to 347 (QLSTPNALGILLLGLVGYYIF). NADP(+) contacts are provided by residues Lys354, Arg358, Leu391, Trp396, and 403–404 (NY). The chain crosses the membrane as a helical span at residues 416 to 436 (LACGGGHLLPYFYIIYMTILL). NADP(+) is bound by residues Asp443, 447–451 (CANKY), and Tyr458.

Belongs to the ERG4/ERG24 family. In terms of assembly, interacts with DHCR24; this interaction regulates DHCR7 activity. Interacts with TMEM147.

Its subcellular location is the endoplasmic reticulum membrane. It catalyses the reaction cholesterol + NADP(+) = 7-dehydrocholesterol + NADPH + H(+). The enzyme catalyses 7-dehydrodesmosterol + NADPH + H(+) = desmosterol + NADP(+). It carries out the reaction 5,6alpha-epoxy-5alpha-cholestan-3beta-ol + H2O = 5alpha-cholestane-3beta,5,6beta-triol. The catalysed reaction is 5,6beta-epoxy-5beta-cholestan-3beta-ol + H2O = 5alpha-cholestane-3beta,5,6beta-triol. Its pathway is steroid biosynthesis; cholesterol biosynthesis. Functionally, oxidoreductase that catalyzes the last step of the cholesterol synthesis pathway, which transforms cholesta-5,7-dien-3beta-ol (7-dehydrocholesterol,7-DHC) into cholesterol by reducing the C7-C8 double bond of its sterol core. Can also metabolize cholesta-5,7,24-trien-3beta-ol (7-dehydrodemosterol, 7-DHD) to desmosterol, which is then metabolized by the Delta(24)-sterol reductase (DHCR24) to cholesterol. Modulates ferroptosis (a form of regulated cell death driven by iron-dependent lipid peroxidation) through the metabolic breakdown of the anti-ferroptotic metabolites 7-DHC and 7-DHD which, when accumulated, divert the propagation of peroxyl radical-mediated damage from phospholipid components to its sterol core, protecting plasma and mitochondrial membranes from phospholipid autoxidation. Component of the microsomal antiestrogen binding site (AEBS), a multiproteic complex at the ER membrane that consists of an association between cholestenol Delta-isomerase/EBP and DHCR7. This complex is responsible for cholesterol-5,6-epoxide hydrolase (ChEH) activity, which consists in the hydration of cholesterol-5,6-epoxides (5,6-EC) into cholestane-3beta,5alpha,6beta-triol (CT). The precise role of each component of this complex has not been described yet. The chain is 7-dehydrocholesterol reductase (Dhcr7) from Mus musculus (Mouse).